A 542-amino-acid polypeptide reads, in one-letter code: Cytochrome P450 27C1 (542 aa).

The transit peptide at 1–80 (MQTSAMALLA…LAAMPGPRTL (80 aa)) directs the protein to the mitochondrion. A disordered region spans residues 20-75 (APERGGLLGGGAPRRPQPAGARLPAGARAEDKGAGRPGSPPGGGRAEGPRSLAAMP). Over residues 32–46 (PRRPQPAGARLPAGA) the composition is skewed to low complexity. C488 lines the heme pocket.

This sequence belongs to the cytochrome P450 family. Requires heme as cofactor. Widely expressed, with highest levels in the liver, kidney and pancreas. In terms of tissue distribution, expressed in the skin (at protein level).

The protein localises to the mitochondrion membrane. The catalysed reaction is all-trans-retinol + 2 reduced [adrenodoxin] + O2 + 2 H(+) = all-trans-3,4-didehydroretinol + 2 oxidized [adrenodoxin] + 2 H2O. It carries out the reaction all-trans-retinol + 2 reduced [adrenodoxin] + O2 + 2 H(+) = all-trans-4-hydroxyretinol + 2 oxidized [adrenodoxin] + H2O. The enzyme catalyses all-trans-retinol + 2 reduced [adrenodoxin] + O2 + 2 H(+) = all-trans-3-hydroxyretinol + 2 oxidized [adrenodoxin] + H2O. Its pathway is cofactor metabolism; retinol metabolism. Its function is as follows. A cytochrome P450 monooxygenase that catalyzes the 3,4 desaturation of all-trans-retinol (also called vitamin A1) to all-trans-3,4-didehydroretinol (also called vitamin A2) in the skin. Desaturates with lower efficiency all-trans retinal and all-trans retinoic acid. Forms minor amounts of 3-hydroxy and 4-hydroxy all-trans-retinol derivatives. Mechanistically, uses molecular oxygen inserting one oxygen atom into a substrate and reducing the second into a water molecule. Two electrons are provided by NADPH via a two-protein mitochondrial transfer system comprising flavoprotein FDXR (adrenodoxin/ferredoxin reductase) and nonheme iron-sulfur protein FDX1 or FDX2 (adrenodoxin/ferredoxin). The chain is Cytochrome P450 27C1 from Homo sapiens (Human).